Here is a 1337-residue protein sequence, read N- to C-terminus: Protein HEG homolog 1 (1337 aa).

The first 31 residues, 1–31, serve as a signal peptide directing secretion; that stretch reads MATPRAPRWPPPSLLLLLLLPLLLLPPAAPG. 2 stretches are compositionally biased toward low complexity: residues 28 to 40 and 54 to 66; these read AAPGARGSLPSPA and PGAGHTAPGPGVA. Disordered stretches follow at residues 28–149, 175–211, 235–296, 313–675, 723–767, and 860–909; these read AAPG…SNMA, SSLLSLESLPESPSSSRSQRRITPSQTESGTSLGFLE, ASHP…QNPS, VPRT…PSPI, LIPS…TVSL, and EGNR…PQTT. Topologically, residues 32–1204 are extracellular; that stretch reads ARGSLPSPAH…GLNCGNPYQL (1173 aa). Polar residues predominate over residues 118-131; it reads TAQNARMSHSSSEG. Low complexity predominate over residues 175–190; that stretch reads SSLLSLESLPESPSSS. Composition is skewed to polar residues over residues 195–206, 247–258, 283–296, and 340–361; these read RITPSQTESGTS, VLSQKRNSSGQE, IKNGNNFTALQNPS, and GITSMSVRSSPSVKDSRTNSGL. Residues 470 to 480 are compositionally biased toward gly residues; the sequence is RGGGEDSGMGG. 2 stretches are compositionally biased toward low complexity: residues 486-502 and 556-575; these read SSSSSSSTSSSESLDSS and SYSEASESSTSSVKISDSPS. Composition is skewed to polar residues over residues 576–585 and 592–617; these read QAQPKQSSMS and AQSSTESPVLHTSNLPTYTSTVNMPN. Residues 637–675 show a composition bias toward low complexity; the sequence is PSTQPSPSQPQPFSSALPSTRSPGSTSETTTSSPSPSPI. Polar residues-rich tracts occupy residues 725–742 and 751–763; these read PSNQTANPKNQSTPQQEK and SLVSPPTDSTKAV. Residues 868–884 are compositionally biased toward low complexity; that stretch reads PTTQPIPLTTSTTSAGE. Over residues 885–896 the composition is skewed to basic and acidic residues; that stretch reads RTTELGRAEESS. The span at 897 to 909 shows a compositional bias: polar residues; the sequence is PSHFLTPSSPQTT. The EGF-like 1 domain occupies 941 to 979; sequence PVNSCTVNPCLHDGKCIVDLTGRGYRCVCPPAWQGENCS. Disulfide bonds link C945/C956, C950/C967, C969/C978, C985/C996, C990/C1005, and C1007/C1018. The region spanning 981–1019 is the EGF-like 2; calcium-binding domain; sequence DVNECLSSPCPPLATCNNTQGSFTCRCPVGYQLEKGICN. N1093 carries an N-linked (GlcNAc...) asparagine glycan. The chain crosses the membrane as a helical span at residues 1205 to 1225; sequence ITVVIAAAGGGLLLILGVALI. The Cytoplasmic segment spans residues 1226-1337; that stretch reads VTCCRKSKND…SDESRRRDYF (112 aa). Position 1315 is a phosphoserine (S1315).

Interacts with CCM2 and KRIT1; KRIT1 markedly facilitates interaction with CCM2.

The protein resides in the cell membrane. It localises to the cell junction. Receptor component of the CCM signaling pathway which is a crucial regulator of heart and vessel formation and integrity. May be acting by stabilizing endothelial cell junctions. In Mus musculus (Mouse), this protein is Protein HEG homolog 1 (Heg1).